The following is a 393-amino-acid chain: Prokineticin receptor 1 (393 aa).

Residues 1–62 (METTVGALGE…TNSRTFFAAK (62 aa)) lie on the Extracellular side of the membrane. Asn-11 is a glycosylation site (N-linked (GlcNAc...) asparagine). The chain crosses the membrane as a helical span at residues 63-83 (IVIGMALVGIMLVCGIGNFIF). The Cytoplasmic portion of the chain corresponds to 84–98 (ITALARYKKLRNLTN). Residues 99–119 (LLIANLAISDFLVAIVCCPFE) form a helical membrane-spanning segment. Residues 120-146 (MDYYVVRQLSWEHGHVLCASVNYLRTV) are Extracellular-facing. A disulfide bond links Cys-137 and Cys-217. A helical membrane pass occupies residues 147–167 (SLYVSTNALLAIAIDRYLAIV). Residues 168–179 (HPLRPRMKCQTA) lie on the Cytoplasmic side of the membrane. A helical membrane pass occupies residues 180-200 (AGLIFLVWSVSILIAIPAAYF). The Extracellular portion of the chain corresponds to 201 to 232 (TTETVLVIVERQEKIFCGQIWPVDQQFYYRSY). A helical transmembrane segment spans residues 233–253 (FLLVFGLEFVGPVVAMTLCYA). The Cytoplasmic portion of the chain corresponds to 254 to 282 (RVSRELWFKAVPGFQTEQIRRRLRCRRRT). A helical membrane pass occupies residues 283 to 303 (VLGLVCVLSAYVLCWAPFYGF). Residues 304 to 322 (TIVRDFFPSVFVKEKHYLT) are Extracellular-facing. Residues 323–343 (AFYVVECIAMSNSMINTLCFV) traverse the membrane as a helical segment. The Cytoplasmic portion of the chain corresponds to 344-393 (TVRNNTSKYLKRILRLQWRASPSGSKASADLDLRTTGIPATEEVDCIRLK).

It belongs to the G-protein coupled receptor 1 family. Expressed at high levels in the heart, skeletal muscle and pancreas. Expressed at lower levels in the brain, lung, liver and kidney.

The protein resides in the cell membrane. Its function is as follows. Receptor for prokineticin 1. Exclusively coupled to the G(q) subclass of heteromeric G proteins. Activation leads to mobilization of calcium, stimulation of phosphoinositide turnover and activation of p44/p42 mitogen-activated protein kinase. May play a role during early pregnancy. In Mus musculus (Mouse), this protein is Prokineticin receptor 1 (Prokr1).